The chain runs to 861 residues: Ataxin-7-like protein 1 (861 aa).

Disordered regions lie at residues 1–31 (MTSERSRIPCLSAAAAEGTGKKQQEGRAMAT), 154–189 (GHHSASSTSKPFKTPKDNLLTSSSKQHTVFPAKGSR), 342–448 (KSRE…GADE), 606–673 (PIPA…LSGP), and 772–861 (FDKS…RTLP). One can recognise an SCA7 domain in the interval 284-351 (RRLSEREFDP…KSREKEVKDK (68 aa)). The span at 342 to 354 (KSREKEVKDKEHL) shows a compositional bias: basic and acidic residues. A compositionally biased stretch (polar residues) spans 355–369 (LTSTREILPSQSGPA). Composition is skewed to low complexity over residues 372–381 (SLLGSSGSSG), 403–417 (SSANSISSSTSSNHS), and 606–616 (PIPAVIPSPSH). Residues 617-627 (KPSKTKTSKSS) show a composition bias toward basic residues. Basic and acidic residues predominate over residues 628-641 (KVKDLSTRSDESPS). Composition is skewed to low complexity over residues 648 to 671 (QSSTSSSSSSSSSSLQTSLSSPLS) and 783 to 794 (SSSSSKACKITK). Positions 817-828 (VNSTSSRQVGKN) are enriched in polar residues. Low complexity predominate over residues 829–847 (SSLALSQSSPSSISSPGHS).

The chain is Ataxin-7-like protein 1 (ATXN7L1) from Homo sapiens (Human).